The sequence spans 185 residues: Ribosome-recycling factor (185 aa).

This sequence belongs to the RRF family.

The protein localises to the cytoplasm. Functionally, responsible for the release of ribosomes from messenger RNA at the termination of protein biosynthesis. May increase the efficiency of translation by recycling ribosomes from one round of translation to another. This chain is Ribosome-recycling factor, found in Listeria monocytogenes serotype 4a (strain HCC23).